The sequence spans 131 residues: Probable ATP synthase subunit g 2, mitochondrial (131 aa).

It belongs to the ATPase g subunit family. Subunit of the F-type ATPase which has 2 components, CF(1) - the catalytic core - and CF(0) - the membrane proton channel.

It is found in the mitochondrion membrane. In terms of biological role, mitochondrial membrane ATP synthase (F(1)F(0) ATP synthase or Complex V) produces ATP from ADP in the presence of a proton gradient across the membrane which is generated by electron transport complexes of the respiratory chain. F-type ATPases consist of two structural domains, F(1) - containing the extramembraneous catalytic core, and F(0) - containing the membrane proton channel, linked together by a central stalk and a peripheral stalk. During catalysis, ATP synthesis in the catalytic domain of F(1) is coupled via a rotary mechanism of the central stalk subunits to proton translocation. Part of the complex F(0) domain. Minor subunit located with subunit a in the membrane. The polypeptide is Probable ATP synthase subunit g 2, mitochondrial (Caenorhabditis elegans).